The primary structure comprises 72 residues: Small ribosomal subunit protein bS18c (72 aa).

This sequence belongs to the bacterial ribosomal protein bS18 family. As to quaternary structure, part of the 30S ribosomal subunit.

It localises to the plastid. The protein resides in the chloroplast. This chain is Small ribosomal subunit protein bS18c, found in Phaeodactylum tricornutum (strain CCAP 1055/1).